The following is a 645-amino-acid chain: Cyclic nucleotide-gated channel rod photoreceptor subunit alpha (645 aa).

At 1 to 121 (MKVGVIETHH…PAGNMYYNWL (121 aa)) the chain is on the cytoplasmic side. The disordered stretch occupies residues 53–100 (NNNSNKDEEKKKKKEKKSKSENKKDGERQKNKEKKEKHKNKDKKKGKE). Residues 70–86 (SKSENKKDGERQKNKEK) show a composition bias toward basic and acidic residues. Residues 87 to 96 (KEKHKNKDKK) are compositionally biased toward basic residues. Residues 122-143 (FCITMPVMYNWTMIIARACFDE) form a helical membrane-spanning segment. Residues 144–153 (LQNDYLAVWF) lie on the Extracellular side of the membrane. A helical membrane pass occupies residues 154–174 (IVDYVSDVIYIADMFVRTRTG). Residues 175–199 (YLEQGLLVKEEQKLKEKYKSSLQFK) are Cytoplasmic-facing. A helical membrane pass occupies residues 200–218 (LDFLSIIPTDLLYFKLGLN). The Extracellular segment spans residues 219-223 (YPELR). A helical transmembrane segment spans residues 224–242 (INRLLRVARMFEFFQRTET). The Cytoplasmic portion of the chain corresponds to 243-249 (RTNYPNI). Residues 250 to 273 (FRISNLVMYIVIIIHWNACVYYSI) form a helical membrane-spanning segment. Over 274 to 296 (SKAIGFGADTWVYPNTSHPEFAR) the chain is Extracellular. Transmembrane regions (helical) follow at residues 297–331 (LTRKYVYSLYWSTLTLTTIGETPPPVRDSEYFFVV) and 332–356 (VDFLVGVLIFATIVGNVGSMISNMN). Over 357-645 (AARAEFQAKI…TDKPGVTKTE (289 aa)) the chain is Cytoplasmic. Residues 439 to 561 (LLVE…DGLL), Glu-498, and Arg-513 contribute to the 3',5'-cyclic GMP site.

The protein belongs to the cyclic nucleotide-gated cation channel (TC 1.A.1.5) family.

It is found in the membrane. Functionally, visual signal transduction is mediated by a G-protein coupled cascade using cGMP as second messenger. This protein can be activated by cGMP which leads to an opening of the cation channel and thereby causing a depolarization of rod photoreceptors. This Gallus gallus (Chicken) protein is Cyclic nucleotide-gated channel rod photoreceptor subunit alpha.